A 329-amino-acid chain; its full sequence is Probable ABC transporter permease protein MG188 (329 aa).

The next 6 membrane-spanning stretches (helical) occupy residues 30-50, 96-116, 128-148, 176-196, 234-254, and 283-303; these read FLLF…PFFL, LISL…IVFV, VFFL…VYIF, ALWA…VLII, LIFL…LALF, and NLAG…GLVL. The ABC transmembrane type-1 domain occupies 88-303; that stretch reads LRNSFLYSLI…VLGVCYGLVL (216 aa).

Belongs to the binding-protein-dependent transport system permease family. MalFG subfamily.

It localises to the cell membrane. Probably part of a binding-protein-dependent transport system. Probably responsible for the translocation of the substrate across the membrane. The polypeptide is Probable ABC transporter permease protein MG188 (Mycoplasma genitalium (strain ATCC 33530 / DSM 19775 / NCTC 10195 / G37) (Mycoplasmoides genitalium)).